The following is a 275-amino-acid chain: Small ribosomal subunit protein uS3 (275 aa).

A KH type-2 domain is found at 38–106; sequence IRRLLSSGLE…QVQLNILEVK (69 aa). Positions 217-275 are disordered; it reads AVPAGADRPRRERPAGSRPRRSGASGTTATGTEAGRAVGSEEPAAAESATTPEAQSTES. Positions 238 to 275 are enriched in low complexity; sequence SGASGTTATGTEAGRAVGSEEPAAAESATTPEAQSTES.

The protein belongs to the universal ribosomal protein uS3 family. Part of the 30S ribosomal subunit. Forms a tight complex with proteins S10 and S14.

In terms of biological role, binds the lower part of the 30S subunit head. Binds mRNA in the 70S ribosome, positioning it for translation. This Mycobacterium marinum (strain ATCC BAA-535 / M) protein is Small ribosomal subunit protein uS3.